Here is a 172-residue protein sequence, read N- to C-terminus: MDIKSLIRNIPDFPKPGIVFRDITTLLGHPEGLRYTIDTLTQKCIELNLRPDYVIGMESRGFLFGVPLAYQLGAGFIPVRKPGKLPAAVHTIEYDLEYGSDKLEIHQDAVADHHRVLIVDDLIATGGTARATADLLAKIGCEVLGFAFIIELKDLGGRQKLPDLPIITLVDY.

Belongs to the purine/pyrimidine phosphoribosyltransferase family. In terms of assembly, homodimer.

It localises to the cytoplasm. It carries out the reaction AMP + diphosphate = 5-phospho-alpha-D-ribose 1-diphosphate + adenine. It functions in the pathway purine metabolism; AMP biosynthesis via salvage pathway; AMP from adenine: step 1/1. Catalyzes a salvage reaction resulting in the formation of AMP, that is energically less costly than de novo synthesis. The sequence is that of Adenine phosphoribosyltransferase from Gloeothece citriformis (strain PCC 7424) (Cyanothece sp. (strain PCC 7424)).